Reading from the N-terminus, the 867-residue chain is Alanine--tRNA ligase (867 aa).

The Zn(2+) site is built by His-556, His-560, Cys-658, and His-662.

This sequence belongs to the class-II aminoacyl-tRNA synthetase family. Requires Zn(2+) as cofactor.

The protein localises to the cytoplasm. It carries out the reaction tRNA(Ala) + L-alanine + ATP = L-alanyl-tRNA(Ala) + AMP + diphosphate. Its function is as follows. Catalyzes the attachment of alanine to tRNA(Ala) in a two-step reaction: alanine is first activated by ATP to form Ala-AMP and then transferred to the acceptor end of tRNA(Ala). Also edits incorrectly charged Ser-tRNA(Ala) and Gly-tRNA(Ala) via its editing domain. This chain is Alanine--tRNA ligase, found in Fusobacterium nucleatum subsp. nucleatum (strain ATCC 25586 / DSM 15643 / BCRC 10681 / CIP 101130 / JCM 8532 / KCTC 2640 / LMG 13131 / VPI 4355).